Reading from the N-terminus, the 130-residue chain is Large ribosomal subunit protein eL32 (130 aa).

Belongs to the eukaryotic ribosomal protein eL32 family.

The protein is Large ribosomal subunit protein eL32 (rpl32e) of Pyrococcus horikoshii (strain ATCC 700860 / DSM 12428 / JCM 9974 / NBRC 100139 / OT-3).